A 1014-amino-acid polypeptide reads, in one-letter code: Valine--tRNA ligase (1014 aa).

Residues P49 to H59 carry the 'HIGH' region motif. Positions K542–S546 match the 'KMSKS' region motif. Residue K545 coordinates ATP. A coiled-coil region spans residues V947 to V1014.

This sequence belongs to the class-I aminoacyl-tRNA synthetase family. ValS type 1 subfamily. Monomer.

The protein resides in the cytoplasm. The enzyme catalyses tRNA(Val) + L-valine + ATP = L-valyl-tRNA(Val) + AMP + diphosphate. Its function is as follows. Catalyzes the attachment of valine to tRNA(Val). As ValRS can inadvertently accommodate and process structurally similar amino acids such as threonine, to avoid such errors, it has a 'posttransfer' editing activity that hydrolyzes mischarged Thr-tRNA(Val) in a tRNA-dependent manner. This chain is Valine--tRNA ligase, found in Nostoc sp. (strain PCC 7120 / SAG 25.82 / UTEX 2576).